Reading from the N-terminus, the 113-residue chain is UPF0122 protein Lreu_1156 (113 aa).

It belongs to the UPF0122 family.

In terms of biological role, might take part in the signal recognition particle (SRP) pathway. This is inferred from the conservation of its genetic proximity to ftsY/ffh. May be a regulatory protein. This chain is UPF0122 protein Lreu_1156, found in Limosilactobacillus reuteri (strain DSM 20016) (Lactobacillus reuteri).